The primary structure comprises 212 residues: Ribonuclease HII (212 aa).

In terms of domain architecture, RNase H type-2 spans 22-211 (GLVAGVDEVG…VADRILLQNT (190 aa)). A divalent metal cation is bound by residues D28, E29, and D120.

The protein belongs to the RNase HII family. Mn(2+) serves as cofactor. The cofactor is Mg(2+).

It localises to the cytoplasm. The catalysed reaction is Endonucleolytic cleavage to 5'-phosphomonoester.. Functionally, endonuclease that specifically degrades the RNA of RNA-DNA hybrids. This chain is Ribonuclease HII, found in Shewanella frigidimarina (strain NCIMB 400).